A 362-amino-acid chain; its full sequence is Phosphoserine aminotransferase (362 aa).

An L-glutamate-binding site is contributed by Arg-41. Residues 75–76 (GS), Phe-101, Thr-152, Asp-173, and Gln-196 contribute to the pyridoxal 5'-phosphate site. Lys-197 is modified (N6-(pyridoxal phosphate)lysine). Residue 239-240 (NT) participates in pyridoxal 5'-phosphate binding.

It belongs to the class-V pyridoxal-phosphate-dependent aminotransferase family. SerC subfamily. Homodimer. Requires pyridoxal 5'-phosphate as cofactor.

It localises to the cytoplasm. The enzyme catalyses O-phospho-L-serine + 2-oxoglutarate = 3-phosphooxypyruvate + L-glutamate. The catalysed reaction is 4-(phosphooxy)-L-threonine + 2-oxoglutarate = (R)-3-hydroxy-2-oxo-4-phosphooxybutanoate + L-glutamate. It participates in amino-acid biosynthesis; L-serine biosynthesis; L-serine from 3-phospho-D-glycerate: step 2/3. In terms of biological role, catalyzes the reversible conversion of 3-phosphohydroxypyruvate to phosphoserine and of 3-hydroxy-2-oxo-4-phosphonooxybutanoate to phosphohydroxythreonine. This Leuconostoc mesenteroides subsp. mesenteroides (strain ATCC 8293 / DSM 20343 / BCRC 11652 / CCM 1803 / JCM 6124 / NCDO 523 / NBRC 100496 / NCIMB 8023 / NCTC 12954 / NRRL B-1118 / 37Y) protein is Phosphoserine aminotransferase.